A 104-amino-acid polypeptide reads, in one-letter code: Large ribosomal subunit protein uL24 (104 aa).

This sequence belongs to the universal ribosomal protein uL24 family. Part of the 50S ribosomal subunit.

One of two assembly initiator proteins, it binds directly to the 5'-end of the 23S rRNA, where it nucleates assembly of the 50S subunit. Functionally, one of the proteins that surrounds the polypeptide exit tunnel on the outside of the subunit. This chain is Large ribosomal subunit protein uL24, found in Clostridium botulinum (strain Alaska E43 / Type E3).